The chain runs to 257 residues: V-type proton ATPase subunit D (257 aa).

Residues 211-233 (KKKDLKAKEAQKEENSANKTIME) are disordered. The segment covering 216 to 226 (KAKEAQKEENS) has biased composition (basic and acidic residues).

It belongs to the V-ATPase D subunit family. In terms of assembly, V-ATPase is a heteromultimeric enzyme composed of a peripheral catalytic V1 complex (components A to H) attached to an integral membrane V0 proton pore complex (components: a, c, c', c'' and d).

Functionally, subunit of the peripheral V1 complex of vacuolar ATPase. Vacuolar ATPase is responsible for acidifying a variety of intracellular compartments in eukaryotic cells, thus providing most of the energy required for transport processes in the vacuolar system. The polypeptide is V-type proton ATPase subunit D (atp6v1d) (Dictyostelium discoideum (Social amoeba)).